Reading from the N-terminus, the 261-residue chain is Protein TfpB (261 aa).

The chain is Protein TfpB (tfpB) from Moraxella bovis.